Consider the following 283-residue polypeptide: Ribosomal RNA small subunit methyltransferase A (283 aa).

The S-adenosyl-L-methionine site is built by asparagine 22, leucine 24, glycine 49, glutamate 70, and asparagine 113.

It belongs to the class I-like SAM-binding methyltransferase superfamily. rRNA adenine N(6)-methyltransferase family. RsmA subfamily.

The protein resides in the cytoplasm. The catalysed reaction is adenosine(1518)/adenosine(1519) in 16S rRNA + 4 S-adenosyl-L-methionine = N(6)-dimethyladenosine(1518)/N(6)-dimethyladenosine(1519) in 16S rRNA + 4 S-adenosyl-L-homocysteine + 4 H(+). Specifically dimethylates two adjacent adenosines (A1518 and A1519) in the loop of a conserved hairpin near the 3'-end of 16S rRNA in the 30S particle. May play a critical role in biogenesis of 30S subunits. This chain is Ribosomal RNA small subunit methyltransferase A, found in Myxococcus xanthus (strain DK1622).